Here is a 108-residue protein sequence, read N- to C-terminus: Protein SMALL AUXIN UP-REGULATED RNA 51 (108 aa).

This sequence belongs to the ARG7 family. In terms of tissue distribution, expressed in organ primordia. Hardly observed in leaves.

The protein localises to the cell membrane. Functionally, provide a mechanistic link between auxin and plasma membrane H(+)-ATPases (PM H(+)-ATPases, e.g. AHA1 and AHA2), and triggers PM H(+)-ATPases activity by promoting phosphorylation of their C-terminal autoinhibitory domain as a result of PP2C-D subfamily of type 2C phosphatases inhibition, thus leading to the acidification of the apoplast and the facilitation of solutes and water uptake to drive cell expansion. Triggers plant growth probably by promoting cell elongation. Regulates branch angles and bending. In Arabidopsis thaliana (Mouse-ear cress), this protein is Protein SMALL AUXIN UP-REGULATED RNA 51.